The chain runs to 68 residues: Protein transport protein Sec61 subunit gamma (68 aa).

At 1–32 (MDQVMAWVEPGKQFAKDSIRLVKRCTKPDRKE) the chain is on the cytoplasmic side. A helical membrane pass occupies residues 33–61 (FQKIAVATAIGFAIMGFIGFFVKLIHIPI). At 62–68 (NNIIVGS) the chain is on the extracellular side.

The protein belongs to the SecE/SEC61-gamma family. As to quaternary structure, heterotrimeric complex composed of SEC61-alpha, SEC61-beta and SEC61-gamma. Component of the ribosome-associated ER translocon complex.

It is found in the endoplasmic reticulum membrane. Functionally, necessary for protein translocation in the endoplasmic reticulum and multi-pass membrane protein biogenesis. The sequence is that of Protein transport protein Sec61 subunit gamma (SEC61G) from Ciona intestinalis (Transparent sea squirt).